The sequence spans 404 residues: Phosphopentomutase (404 aa).

Positions 10, 303, 308, 344, 345, and 356 each coordinate Mn(2+).

Belongs to the phosphopentomutase family. Mn(2+) serves as cofactor.

Its subcellular location is the cytoplasm. The enzyme catalyses 2-deoxy-alpha-D-ribose 1-phosphate = 2-deoxy-D-ribose 5-phosphate. It catalyses the reaction alpha-D-ribose 1-phosphate = D-ribose 5-phosphate. Its pathway is carbohydrate degradation; 2-deoxy-D-ribose 1-phosphate degradation; D-glyceraldehyde 3-phosphate and acetaldehyde from 2-deoxy-alpha-D-ribose 1-phosphate: step 1/2. Functionally, isomerase that catalyzes the conversion of deoxy-ribose 1-phosphate (dRib-1-P) and ribose 1-phosphate (Rib-1-P) to deoxy-ribose 5-phosphate (dRib-5-P) and ribose 5-phosphate (Rib-5-P), respectively. This Shewanella baltica (strain OS155 / ATCC BAA-1091) protein is Phosphopentomutase.